Reading from the N-terminus, the 462-residue chain is Argininosuccinate lyase (462 aa).

It belongs to the lyase 1 family. Argininosuccinate lyase subfamily.

It localises to the cytoplasm. It carries out the reaction 2-(N(omega)-L-arginino)succinate = fumarate + L-arginine. It participates in amino-acid biosynthesis; L-arginine biosynthesis; L-arginine from L-ornithine and carbamoyl phosphate: step 3/3. This chain is Argininosuccinate lyase, found in Dechloromonas aromatica (strain RCB).